We begin with the raw amino-acid sequence, 1377 residues long: Endoribonuclease Dicer homolog 2b (1377 aa).

Residues 1–15 (MGGPLTAAGGRGDGG) show a composition bias toward gly residues. Residues 1–30 (MGGPLTAAGGRGDGGAKAVEPLRPPPPPDP) form a disordered region. The Helicase ATP-binding domain occupies 41–222 (ALERAVRGNT…HNYSKQISEI (182 aa)). 54–61 (LETGSGKT) is an ATP binding site. Residues 163–166 (DECH) carry the DECH box motif. Positions 388–561 (TLLQYRHMQD…DTYYRVESTP (174 aa)) constitute a Helicase C-terminal domain. Residues 534–626 (SLRLGSISCQ…LPELDVPCDE (93 aa)) enclose the Dicer dsRNA-binding fold domain. The region spanning 798–913 (RDIDLLQTKD…LPPELCRIIM (116 aa)) is the PAZ domain. RNase III domains follow at residues 940-1095 (SVKL…STAG) and 1132-1276 (VRSL…LDSK). Mg(2+) is bound by residues Glu-1171, Asp-1262, and Glu-1265. Residues 1302-1367 (DPVKGLQEFC…SKAVLKDLIA (66 aa)) form the DRBM domain.

It belongs to the helicase family. Dicer subfamily. As to quaternary structure, may interact with ARGONAUTE1 or PINHEAD through their common PAZ domains. The cofactor is Mg(2+). Mn(2+) serves as cofactor.

It is found in the nucleus. Functionally, probably involved in the RNA silencing pathway. May cleave double-stranded RNA to produce short 21-24 nucleotides (nt) RNAs which target the selective destruction of complementary RNAs. The sequence is that of Endoribonuclease Dicer homolog 2b (DCL2B) from Oryza sativa subsp. japonica (Rice).